The chain runs to 2312 residues: MKGHQLKSWIFELREILREIKSVGSFIHIFFHQERFIKLLDSRIWSILLSRNSQGSTSNRYFTIKGVVLFVVVVLIYRINNRKMVERKNLYLTGLLPIPMNSIGPRNDTLEESFWSSNINRLIVSLLYLPKGKKISESSFLDPKESTWVLPITKKCIMSESNWGSRWWRNWIGKKRDSSCKISNETVAGIEISFKEKDIKYLEFLFVYYMDDPIRKDHDWELFDRLSPRKGRNIINLNSGQLFEILVKDWICYLMFAFREKIPIEVEGFFKQQGAGSTIQSNDIEHVSHLFSRKKWAISLQNCAQFHMWQFRQDLFVSWGNNPHESDFLRNISRENWIWLDNVWLVNKDRFFSKARNISSNIQYDSTRSSFVQGRNSSQLKGSSDQSRDHFDSISNEDSEYHTLINQRKIQQLKERSILWDPSFLQTERTEIESDRFPKCLSGYSSMSRLFTEGEKEMNNHLLPEEIEEFLGNPTRSIRSFFSDRSSELHLGSNPTERSTRNQKLLKKEQDVSFVPSRRSENKEIVNIFKIITYLQNTVSIHPISSDPGCDMVLKDELDMDSSNKISFLNKNPFFDLFHLFHDRNGGGYTLHHDFESEERFQEMADLFTLSITEPDLVYHKGFTFFIDSYGLDQKQFLNEVFNSRDESKKKSLLVLPPIFYEENESFYRRIRKKWVRISCGNDLEDPKQKIVVFASNNIMEAVNQYGLILNLIQIQYSTYGYIRNVLTQFFLMNRSDRNFEYGIQRDQIGNDTLNHRTIMKYTINQHLSNLKQSQKKWFDPLIFIFLSRTERSMNWDPNAYRYKWSNGSKNFQEHLEHFISEQKSRFLFQVVFDRLRINQYSIDWSEVIDKKDLSKSLRFFLSKLLLFLSKFLLFLSNSLPFFFVSFGNIPIHRSEIHIYELKGPNDQLCNQLVEPIGLQIVHLKKLKPFLLLLDDHDTSQKSKFLINGGTISPFLFNKIPKWMIDSFHTRNNRRKSFDNTDSYFSMISHDQDNWLNPVKPFHRSSLISSFYKANRLRFLNNLHHFCFYCNKRFPFYVEKARIKNYDFTYGQFLNILFIRNKIFSLCGGKKKHAFLERDTISPIESQVSNIFIPNDFPQSGNERYNLYKSFHFPIRSDPFVRRAIYSIADISGTPLTEGQIVNFERTYCQPLSDMNLSDSEGKNLHQYLNFNSNMGLIHTPCSEKYLPSEKRKKRSLCLKKCVEKGQMYRTFQRDNAFSTLSKWNLFQTYMPWFLTSTGYKYLNLIFLDTFSDLLPILSSSQKFLSIFHDIMHGSDISWLIFQKRLWKICRNLISEISSKCLHNLLLSEEMIHRNNEPPLISTHLRSPNVREFLYSILFLLLVAGYLVCTHLLFVSHAYSELQTEFEKVKSLMIPSYMIELRKLLDRYPTSELNSFWLKNLFLVALEQLGDFLEEMRGSASGGNMLWGGGPAYGVKSIRSKKKFWNINLIDLISIIPNPINRITFSRNTRHLSHTSKEIYSLIRKRKNVNGDWIDDKIESLVANSDWIDDKEREFLVQFSTLTTEKRIDQILLSLTHSDHLSKNDSGYQMIEEPGAIYLRYLVDIHKKYLMNYEFNTPCLAERRIFLAYYQTTTYSQTSCGVNSFHFPSHGKPFSLRLALSPSRGILVIGSIGTGRSYLVKYLATNSYLPFVTVFLNKFLNNKPKGFLIDDSDDIDDSDDIDDSDDIDASDDIDVSDDIDVSDDDIDRDFDFDTELEFLTTMDALTIDMMPEIEINRFYITLQFELAKAMSPCIIWIPNIHDLDVNESNYLSLGLLVNYLSRDCERCSTRNILVIASTHIPQKVDPALIAPNKLNTCIKIRRFLIPQQRKHFFTLSYTRGFHLENKMFHTNGFGSITMGSNVRDLVALTNEALSISITQKKSIIDTNIIRSALHRQTWDLRSRVRSVQDHGIFFYQIGRAVAQNVFLSNCPIDPISIYMKKKSCNEGDSYLYKWYFELGTSMKKLTILLYLLSCSAGSVAQDLWSLPGPDEKNGITYYGLVENDSDLVHGLLEVEGALVGSSRTEKDCSQFDNDRVTLLLRPEPRSPLDMMQNGSCSILDQRFLYEKYESEFEEGEGEEVLDPQQIEEDLFTHIVWAPRIWRPWGFLFDCIERPNELGFPYWARSFRGKRIIYDEEIIYDEEIIYDEEDELQENDSEFLQSGTMQYQIRDRSSKEQGFFRISQFIWDPADPLFFLFKDQPFVSVFSHREFFADEEMSKGLLTSQTDPPTSIYKRWFIKNTQEKRFELLIHRQRWLRTNSSLSNGFFRSNTLSESYQYLSNLFLSNGTLLDQMTKALLRKRWLFPDEMKIGFM.

1630 to 1637 (GSIGTGRS) contributes to the ATP binding site.

This sequence belongs to the Ycf2 family.

Its subcellular location is the plastid. The protein localises to the chloroplast stroma. Functionally, probable ATPase of unknown function. Its presence in a non-photosynthetic plant (Epifagus virginiana) and experiments in tobacco indicate that it has an essential function which is probably not related to photosynthesis. This is Protein Ycf2 from Manihot esculenta (Cassava).